The chain runs to 197 residues: HTH-type transcriptional regulator BetI (197 aa).

One can recognise an HTH tetR-type domain in the interval 8-68 (PIRRQQLIEA…ATMRYLMSVL (61 aa)). The H-T-H motif DNA-binding region spans 31 to 50 (SIALIARLAGVSNGIISHYF).

It participates in amine and polyamine biosynthesis; betaine biosynthesis via choline pathway [regulation]. Its function is as follows. Repressor involved in the biosynthesis of the osmoprotectant glycine betaine. It represses transcription of the choline transporter BetT and the genes of BetAB involved in the synthesis of glycine betaine. The protein is HTH-type transcriptional regulator BetI of Pseudomonas fluorescens (strain Pf0-1).